The primary structure comprises 235 residues: UPF0758 protein COPRO5265_1522 (235 aa).

Residues 109-235 (RITTPEDAIE…HVSLAREKLI (127 aa)) enclose the MPN domain. Zn(2+) contacts are provided by His-184, His-186, and Asp-197. Residues 184-197 (HNHPSGDPSPSRED) carry the JAMM motif motif.

It belongs to the UPF0758 family.

The polypeptide is UPF0758 protein COPRO5265_1522 (Coprothermobacter proteolyticus (strain ATCC 35245 / DSM 5265 / OCM 4 / BT)).